The primary structure comprises 63 residues: U-reduvitoxin-Pr4a (63 aa).

The signal sequence occupies residues Met-1–Ala-19. 3 disulfide bridges follow: Cys-24-Cys-40, Cys-31-Cys-45, and Cys-39-Cys-52.

It belongs to the venom Ptu1-like knottin family. As to expression, expressed by the venom gland.

The protein resides in the secreted. Its function is as follows. Binds reversibly and blocks P/Q-type voltage-gated calcium channels (Cav). This chain is U-reduvitoxin-Pr4a, found in Platymeris rhadamanthus (Red spot assassin bug).